The sequence spans 437 residues: Enolase (437 aa).

Gln162 lines the (2R)-2-phosphoglycerate pocket. The active-site Proton donor is the Glu204. Positions 251, 297, and 324 each coordinate Mg(2+). The (2R)-2-phosphoglycerate site is built by Lys349, Arg378, Ser379, and Lys400. Lys349 serves as the catalytic Proton acceptor.

This sequence belongs to the enolase family. The cofactor is Mg(2+).

The protein localises to the cytoplasm. Its subcellular location is the secreted. It is found in the cell surface. The enzyme catalyses (2R)-2-phosphoglycerate = phosphoenolpyruvate + H2O. It participates in carbohydrate degradation; glycolysis; pyruvate from D-glyceraldehyde 3-phosphate: step 4/5. Functionally, catalyzes the reversible conversion of 2-phosphoglycerate (2-PG) into phosphoenolpyruvate (PEP). It is essential for the degradation of carbohydrates via glycolysis. The sequence is that of Enolase from Chlorobium phaeobacteroides (strain DSM 266 / SMG 266 / 2430).